We begin with the raw amino-acid sequence, 620 residues long: Chaperone protein HscA homolog (620 aa).

Belongs to the heat shock protein 70 family.

Its function is as follows. Chaperone involved in the maturation of iron-sulfur cluster-containing proteins. Has a low intrinsic ATPase activity which is markedly stimulated by HscB. This chain is Chaperone protein HscA homolog, found in Pseudomonas syringae pv. tomato (strain ATCC BAA-871 / DC3000).